Reading from the N-terminus, the 236-residue chain is MGQKINPIGLRLGVNRTWDSRWYADSGEYGRLLHEDLRIRSYVLEELRQAAISKVVIERPHKKCRVTIHSARPGLIIGKKGADIEKLRRKLSEMTNAETSLNIVEIRKPEIDATIIAQSIAQQLERRVAFRRAMKRAVQSAMRLGAEGIRINCSGRLGGAEIARMEWYREGRVPLHTLRSDVDYGTAEAKTAYGICGIKVWVFKGEILEHDPMASERRATEADQSGSSSNRRRENA.

A KH type-2 domain is found at 39 to 107; that stretch reads IRSYVLEELR…ETSLNIVEIR (69 aa). Positions 214–236 are disordered; it reads ASERRATEADQSGSSSNRRRENA.

The protein belongs to the universal ribosomal protein uS3 family. As to quaternary structure, part of the 30S ribosomal subunit. Forms a tight complex with proteins S10 and S14.

Binds the lower part of the 30S subunit head. Binds mRNA in the 70S ribosome, positioning it for translation. This chain is Small ribosomal subunit protein uS3, found in Bartonella tribocorum (strain CIP 105476 / IBS 506).